Reading from the N-terminus, the 155-residue chain is Ribosome maturation factor RimP (155 aa).

This sequence belongs to the RimP family.

The protein localises to the cytoplasm. Functionally, required for maturation of 30S ribosomal subunits. The chain is Ribosome maturation factor RimP from Bacteroides fragilis (strain ATCC 25285 / DSM 2151 / CCUG 4856 / JCM 11019 / LMG 10263 / NCTC 9343 / Onslow / VPI 2553 / EN-2).